Consider the following 174-residue polypeptide: Large ribosomal subunit protein uL10 (174 aa).

This sequence belongs to the universal ribosomal protein uL10 family. In terms of assembly, part of the ribosomal stalk of the 50S ribosomal subunit. The N-terminus interacts with L11 and the large rRNA to form the base of the stalk. The C-terminus forms an elongated spine to which L12 dimers bind in a sequential fashion forming a multimeric L10(L12)X complex.

In terms of biological role, forms part of the ribosomal stalk, playing a central role in the interaction of the ribosome with GTP-bound translation factors. The polypeptide is Large ribosomal subunit protein uL10 (Nitrosospira multiformis (strain ATCC 25196 / NCIMB 11849 / C 71)).